The primary structure comprises 423 residues: MVPHLLLLCLLPLVRATEPHEGRADEQSAEAALAVPNASHFFSWNNYTFSDWQNFVGRRRYGAESQNPTVKALLIVAYSFIIVFSLFGNVLVCHVIFKNQRMHSATSLFIVNLAVADIMITLLNTPFTLVRFVNSTWIFGKGMCHVSRFAQYCSLHVSALTLTAIAVDRHQVIMHPLKPRISITKGVIYIAVIWTMATFFSLPHAICQKLFTFKYSEDIVRSLCLPDFPEPADLFWKYLDLATFILLYILPLLIISVAYARVAKKLWLCNMIGDVTTEQYFALRRKKKKTIKMLMLVVVLFALCWFPLNCYVLLLSSKVIRTNNALYFAFHWFAMSSTCYNPFIYCWLNENFRIELKALLSMCQRPPKPQEDRPPSPVPSFRVAWTEKNDGQRAPLANNLLPTSQLQSGKTDLSSVEPIVTMS.

The first 16 residues, 1 to 16 (MVPHLLLLCLLPLVRA), serve as a signal peptide directing secretion. At 18–71 (EPHEGRADEQSAEAALAVPNASHFFSWNNYTFSDWQNFVGRRRYGAESQNPTVK) the chain is on the extracellular side. N-linked (GlcNAc...) asparagine glycans are attached at residues asparagine 37 and asparagine 46. Residues 72–92 (ALLIVAYSFIIVFSLFGNVLV) traverse the membrane as a helical segment. Over 93–107 (CHVIFKNQRMHSATS) the chain is Cytoplasmic. A helical membrane pass occupies residues 108–129 (LFIVNLAVADIMITLLNTPFTL). Residues 130–145 (VRFVNSTWIFGKGMCH) lie on the Extracellular side of the membrane. A glycan (N-linked (GlcNAc...) asparagine) is linked at asparagine 134. Cysteine 144 and cysteine 224 are oxidised to a cystine. The chain crosses the membrane as a helical span at residues 146-167 (VSRFAQYCSLHVSALTLTAIAV). The Cytoplasmic segment spans residues 168–186 (DRHQVIMHPLKPRISITKG). The chain crosses the membrane as a helical span at residues 187–208 (VIYIAVIWTMATFFSLPHAICQ). Residues 209 to 238 (KLFTFKYSEDIVRSLCLPDFPEPADLFWKY) lie on the Extracellular side of the membrane. A helical membrane pass occupies residues 239–260 (LDLATFILLYILPLLIISVAYA). Residues 261-293 (RVAKKLWLCNMIGDVTTEQYFALRRKKKKTIKM) are Cytoplasmic-facing. Residues 294–315 (LMLVVVLFALCWFPLNCYVLLL) traverse the membrane as a helical segment. Over 316 to 327 (SSKVIRTNNALY) the chain is Extracellular. The chain crosses the membrane as a helical span at residues 328-348 (FAFHWFAMSSTCYNPFIYCWL). Residues 349–423 (NENFRIELKA…SSVEPIVTMS (75 aa)) lie on the Cytoplasmic side of the membrane. Polar residues predominate over residues 402 to 414 (PTSQLQSGKTDLS). The disordered stretch occupies residues 402–423 (PTSQLQSGKTDLSSVEPIVTMS).

It belongs to the G-protein coupled receptor 1 family. In terms of tissue distribution, highly expressed in the brain and spinal cord, and found in lower concentrations in the thymus and other tissues.

It is found in the cell membrane. G-protein coupled receptor for PEN, a neuropeptide produced from the precursor protein, proSAAS (encoded by PCSK1N). Acts through a G(i)- and G(q)-alpha-alpha-mediated pathway in response to PEN. Plays a role in food intake and body weight regulation. May contribute to the regulation of anxiety-related behaviors. This chain is G-protein coupled receptor 83, found in Homo sapiens (Human).